The chain runs to 104 residues: Phosphoribosyl-ATP pyrophosphatase (104 aa).

This sequence belongs to the PRA-PH family.

It is found in the cytoplasm. The catalysed reaction is 1-(5-phospho-beta-D-ribosyl)-ATP + H2O = 1-(5-phospho-beta-D-ribosyl)-5'-AMP + diphosphate + H(+). The protein operates within amino-acid biosynthesis; L-histidine biosynthesis; L-histidine from 5-phospho-alpha-D-ribose 1-diphosphate: step 2/9. The chain is Phosphoribosyl-ATP pyrophosphatase from Methanosarcina barkeri (strain Fusaro / DSM 804).